The sequence spans 445 residues: Zinc finger protein 296 (445 aa).

Over residues 1-10 (MSRRKAGRVP) the composition is skewed to basic residues. Residues 1–20 (MSRRKAGRVPRRVDPDTDTD) are disordered. K31 is covalently cross-linked (Glycyl lysine isopeptide (Lys-Gly) (interchain with G-Cter in SUMO2)). Residues 62–88 (SRPLGAPSTCAPRMPLSSKSSDRQPWT) form a disordered region. 3 C2H2-type zinc fingers span residues 138–161 (LSCL…QWDH), 212–234 (PTCD…MRSH), and 240–262 (YSCD…KKTH). The segment at 256-359 (NRHKKTHRQL…TAPRKSHGPG (104 aa)) is disordered. Positions 269 to 278 (SPSTSASSRG) are enriched in polar residues. Positions 320–332 (PGSGAQGGPGFVG) are enriched in gly residues. A compositionally biased stretch (basic and acidic residues) spans 338–351 (KVERTDPVKIEKTA). 3 C2H2-type zinc fingers span residues 360-382 (GKCE…RRSH), 388-410 (YTCD…RRTH), and 418-441 (VKCP…RQKH).

The protein belongs to the krueppel C2H2-type zinc-finger protein family. Interacts with KLF4. In terms of tissue distribution, strongly expressed in testis and embryonic stem cells.

It is found in the nucleus. Its function is as follows. May be a transcriptional corepressor with KLF4. The chain is Zinc finger protein 296 from Mus musculus (Mouse).